Here is a 397-residue protein sequence, read N- to C-terminus: Elongation factor Tu (397 aa).

A tr-type G domain is found at 10–207; that stretch reads KPHVNIGTIG…AVDESIPDPV (198 aa). The G1 stretch occupies residues 19–26; the sequence is GHVDHGKT. Residue 19-26 participates in GTP binding; the sequence is GHVDHGKT. Thr-26 provides a ligand contact to Mg(2+). Residues 63–67 form a G2 region; sequence GITIN. The tract at residues 84-87 is G3; the sequence is DAPG. GTP contacts are provided by residues 84-88 and 139-142; these read DAPGH and NKAD. The segment at 139–142 is G4; it reads NKAD. The segment at 177 to 179 is G5; that stretch reads SGL.

Belongs to the TRAFAC class translation factor GTPase superfamily. Classic translation factor GTPase family. EF-Tu/EF-1A subfamily. As to quaternary structure, monomer.

It localises to the cytoplasm. The enzyme catalyses GTP + H2O = GDP + phosphate + H(+). GTP hydrolase that promotes the GTP-dependent binding of aminoacyl-tRNA to the A-site of ribosomes during protein biosynthesis. This chain is Elongation factor Tu, found in Tropheryma whipplei (strain Twist) (Whipple's bacillus).